Consider the following 101-residue polypeptide: Small ribosomal subunit protein bS18c (101 aa).

Basic residues predominate over residues 1 to 19 (MDKSKRPFRKSKRSFRKRL). Residues 1–23 (MDKSKRPFRKSKRSFRKRLPPIG) form a disordered region.

Belongs to the bacterial ribosomal protein bS18 family. Part of the 30S ribosomal subunit.

The protein resides in the plastid. Its subcellular location is the chloroplast. This chain is Small ribosomal subunit protein bS18c, found in Chloranthus spicatus (Chulantree).